A 128-amino-acid chain; its full sequence is Translation initiation factor 5A (128 aa).

At Lys-35 the chain carries Hypusine.

Belongs to the eIF-5A family.

It localises to the cytoplasm. Functions by promoting the formation of the first peptide bond. The polypeptide is Translation initiation factor 5A (eIF5A) (Methanocella arvoryzae (strain DSM 22066 / NBRC 105507 / MRE50)).